The primary structure comprises 188 residues: dCTP deaminase (188 aa).

DCTP-binding positions include 111-116 (KSTYAR), 135-137 (TLE), Gln-156, Tyr-170, and Gln-180. Residue Glu-137 is the Proton donor/acceptor of the active site.

The protein belongs to the dCTP deaminase family. In terms of assembly, homotrimer.

It carries out the reaction dCTP + H2O + H(+) = dUTP + NH4(+). The protein operates within pyrimidine metabolism; dUMP biosynthesis; dUMP from dCTP (dUTP route): step 1/2. Its function is as follows. Catalyzes the deamination of dCTP to dUTP. This Azoarcus sp. (strain BH72) protein is dCTP deaminase.